The chain runs to 162 residues: Putative 4-hydroxy-4-methyl-2-oxoglutarate aldolase (162 aa).

Residues 75–78 (GDML) and arginine 97 each bind substrate. Aspartate 98 lines the a divalent metal cation pocket.

This sequence belongs to the class II aldolase/RraA-like family. As to quaternary structure, homotrimer. A divalent metal cation is required as a cofactor.

It carries out the reaction 4-hydroxy-4-methyl-2-oxoglutarate = 2 pyruvate. The catalysed reaction is oxaloacetate + H(+) = pyruvate + CO2. In terms of biological role, catalyzes the aldol cleavage of 4-hydroxy-4-methyl-2-oxoglutarate (HMG) into 2 molecules of pyruvate. Also contains a secondary oxaloacetate (OAA) decarboxylase activity due to the common pyruvate enolate transition state formed following C-C bond cleavage in the retro-aldol and decarboxylation reactions. The protein is Putative 4-hydroxy-4-methyl-2-oxoglutarate aldolase of Pseudomonas aeruginosa (strain LESB58).